The sequence spans 308 residues: MMPPVRGTLTQGRSLADLTWLRVGGPADWLFQPADEADLVQFLGALDPAVPVFPMGVGSNLIVRDGGLRAVVIRLGRGFNAIRIEGDRVIAGAAALDAHVARHAADAGRDLTFLRTIPGSIGGAVRMNAGCYGSYVADHLIEVRAVTREGRPVTLPAAELGLAYRQSALPEGCVLTEATFRAEAGDPAALARRMDEQIARRDSSQPTKERSAGSTFRNPAGFSSTGRADDTHELKAWKLIDEAGLRGARRGGAQMSEMHSNFLINAGGATAADLEGLGEEVIKRVFQSSGIRLEWEIMRVGELPVNKE.

The region spanning 22–185 (RVGGPADWLF…TEATFRAEAG (164 aa)) is the FAD-binding PCMH-type domain. Arginine 165 is a catalytic residue. The segment covering 197-211 (QIARRDSSQPTKERS) has biased composition (basic and acidic residues). Positions 197-228 (QIARRDSSQPTKERSAGSTFRNPAGFSSTGRA) are disordered. Positions 212 to 226 (AGSTFRNPAGFSSTG) are enriched in polar residues. The Proton donor role is filled by serine 214. The active site involves glutamate 296.

The protein belongs to the MurB family. It depends on FAD as a cofactor.

The protein resides in the cytoplasm. It carries out the reaction UDP-N-acetyl-alpha-D-muramate + NADP(+) = UDP-N-acetyl-3-O-(1-carboxyvinyl)-alpha-D-glucosamine + NADPH + H(+). It functions in the pathway cell wall biogenesis; peptidoglycan biosynthesis. In terms of biological role, cell wall formation. This Cereibacter sphaeroides (strain ATCC 17023 / DSM 158 / JCM 6121 / CCUG 31486 / LMG 2827 / NBRC 12203 / NCIMB 8253 / ATH 2.4.1.) (Rhodobacter sphaeroides) protein is UDP-N-acetylenolpyruvoylglucosamine reductase.